A 270-amino-acid chain; its full sequence is Phospholysine phosphohistidine inorganic pyrophosphate phosphatase (270 aa).

Mg(2+)-binding residues include aspartate 17 and serine 19. Residues 17-19 (DIS), 54-55 (TN), and lysine 189 contribute to the substrate site. Residue aspartate 214 coordinates Mg(2+).

This sequence belongs to the HAD-like hydrolase superfamily. Homodimer. The cofactor is Mg(2+).

Its subcellular location is the cytoplasm. The protein localises to the nucleus. The catalysed reaction is diphosphate + H2O = 2 phosphate + H(+). Its function is as follows. Phosphatase that hydrolyzes imidodiphosphate, 3-phosphohistidine and 6-phospholysine. Has broad substrate specificity and can also hydrolyze inorganic diphosphate, but with lower efficiency. This Mus musculus (Mouse) protein is Phospholysine phosphohistidine inorganic pyrophosphate phosphatase (Lhpp).